The following is a 400-amino-acid chain: Trans-enoyl reductase ucsL (400 aa).

NADP(+) is bound at residue 50 to 53 (TDHK). 145–152 (SVHGSVAL) is a binding site for substrate. Residues 204–207 (STAC), 227–230 (SPRN), Tyr245, and 292–293 (LE) each bind NADP(+). 313–317 (GPVMF) serves as a coordination point for substrate. 389–390 (VS) serves as a coordination point for NADP(+).

This sequence belongs to the zinc-containing alcohol dehydrogenase family. In terms of assembly, monomer.

It participates in mycotoxin biosynthesis. In terms of biological role, trans-enoyl reductase; part of the gene cluster that mediates the biosynthesis of UCS1025A, a member of the pyrrolizidinone family that acts as a strong telomerase inhibitor and displays potent antibacterial and antitumor properties. These compounds share a hemiaminal-containing pyrrolizidinone core fused with a gamma-lactone, giving a furopyrrolizidine that is connected to a decalin fragment. The polyketide synthase module (PKS) of the PKS-NRPS ucsA is responsible for the synthesis of the polyketide backbone via the condensation of an acetyl-CoA starter unit with 6 malonyl-CoA units. The downstream nonribosomal peptide synthetase (NRPS) module then amidates the carboxyl end of the polyketide with a 2S,3S-methylproline derived from L-isoleucine by the 2-oxoglutarate-dependent dioxygenase ucsF which converts L-isoleucine to (4S,5S)-4-methylpyrroline-5-carboxylate that is further converted to 2S,3S-methylproline by the pyrroline-5-carboxylate reductase ucsG. Reductive release of the completed aminoacyl polyketide from the assembly line can form the 3-pyrrolin-2-one structure via an intramolecular Knoevenagel reaction. Because ucsA lacks a designated enoylreductase (ER) domain, the required activity is provided the enoyl reductase ucsL. This keto acyclic precursor is the substrate of the Diels-Alderase ucsH, that catalyzes the Diels-Alder cycloaddition. Oxidation of the 3S-methyl group to a carboxylate by the cytochrome P450 monooxygenase ucsK allows an oxa-Michael cyclization that might involve the reductase/dehydrogenase ucsI and which furnishes the furopyrrolizidine. The oxidase ucsJ likely plays a critical role in stereoselective reduction of the C5-C6 double bond to afford the required R-configured carboxylate group. Further enolization and oxidation at C5 by an unidentified enzyme affords the last intermediate that can undergo oxa-Michael cyclization to yield UCS1025A. In Acremonium sp, this protein is Trans-enoyl reductase ucsL.